We begin with the raw amino-acid sequence, 359 residues long: 3-dehydroquinate synthase (359 aa).

NAD(+)-binding positions include 72 to 77 (DGEQYK), 106 to 110 (GVIGD), 130 to 131 (TT), lysine 143, lysine 152, and 170 to 173 (CLKT). Residues glutamate 185, histidine 248, and histidine 265 each contribute to the Zn(2+) site.

Belongs to the sugar phosphate cyclases superfamily. Dehydroquinate synthase family. Co(2+) serves as cofactor. The cofactor is Zn(2+). It depends on NAD(+) as a cofactor.

It localises to the cytoplasm. It carries out the reaction 7-phospho-2-dehydro-3-deoxy-D-arabino-heptonate = 3-dehydroquinate + phosphate. It functions in the pathway metabolic intermediate biosynthesis; chorismate biosynthesis; chorismate from D-erythrose 4-phosphate and phosphoenolpyruvate: step 2/7. Its function is as follows. Catalyzes the conversion of 3-deoxy-D-arabino-heptulosonate 7-phosphate (DAHP) to dehydroquinate (DHQ). The chain is 3-dehydroquinate synthase from Photobacterium profundum (strain SS9).